The sequence spans 402 residues: MIVVGKVDKTPVAKRLVEIVERKGQGHPDYIADGVAEWVSKYLSKYYLERFGVILHHNVDKTLVVGGQASPRFGGGEILQPIYILVSGRATYEVRTKEGVVKIPLGPIVMQAARDWIKNHFRYLDPDVHVVIDYRIGQGSADLVGIYDLGVRGIPLANDTSVGVGYAPLTPLEELVYKTERLLNSRDFKAKYPEVGEDVKVMGVRVGKEVKLTIATAMISRLVKDKSHYLSVKDDVKKAVEDLASKIAPEYSVEVTINAADKPEHGIFYLTVTGTSAEHGDDGMTGRGNRANGLITPMRSMSLEAAAGKNPVSHVGKIYNVVAQKIADRIYKEVKDVIEVYVEIVSQIGKPINEPKILNIEIIKDGELTGEVKNEVEAIAKEELGRITQVTDLILRGEVSLY.

An ATP-binding site is contributed by 137–142 (GQGSAD).

Belongs to the AdoMet synthase 2 family. It depends on Mg(2+) as a cofactor.

The catalysed reaction is L-methionine + ATP + H2O = S-adenosyl-L-methionine + phosphate + diphosphate. It functions in the pathway amino-acid biosynthesis; S-adenosyl-L-methionine biosynthesis; S-adenosyl-L-methionine from L-methionine: step 1/1. Catalyzes the formation of S-adenosylmethionine from methionine and ATP. The chain is S-adenosylmethionine synthase from Pyrobaculum aerophilum (strain ATCC 51768 / DSM 7523 / JCM 9630 / CIP 104966 / NBRC 100827 / IM2).